Here is a 153-residue protein sequence, read N- to C-terminus: Glucose-6-phosphate 1-dehydrogenase (153 aa).

Residues R21 and K120 each contribute to the NADP(+) site. K120 contacts D-glucose 6-phosphate.

This sequence belongs to the glucose-6-phosphate dehydrogenase family.

The protein localises to the cytoplasm. It localises to the cytosol. The enzyme catalyses D-glucose 6-phosphate + NADP(+) = 6-phospho-D-glucono-1,5-lactone + NADPH + H(+). The protein operates within carbohydrate degradation; pentose phosphate pathway; D-ribulose 5-phosphate from D-glucose 6-phosphate (oxidative stage): step 1/3. Its function is as follows. Cytosolic glucose-6-phosphate dehydrogenase that catalyzes the first and rate-limiting step of the oxidative branch within the pentose phosphate pathway/shunt, an alternative route to glycolysis for the dissimilation of carbohydrates and a major source of reducing power and metabolic intermediates for fatty acid and nucleic acid biosynthetic processes. The sequence is that of Glucose-6-phosphate 1-dehydrogenase (Zw) from Drosophila simulans (Fruit fly).